The following is a 134-amino-acid chain: Holo-[acyl-carrier-protein] synthase (134 aa).

The Mg(2+) site is built by aspartate 8 and glutamate 57.

This sequence belongs to the P-Pant transferase superfamily. AcpS family. It depends on Mg(2+) as a cofactor.

The protein localises to the cytoplasm. The enzyme catalyses apo-[ACP] + CoA = holo-[ACP] + adenosine 3',5'-bisphosphate + H(+). Functionally, transfers the 4'-phosphopantetheine moiety from coenzyme A to a Ser of acyl-carrier-protein. The protein is Holo-[acyl-carrier-protein] synthase of Rhizobium leguminosarum bv. trifolii (strain WSM2304).